Here is a 319-residue protein sequence, read N- to C-terminus: 4-diphosphocytidyl-2-C-methyl-D-erythritol kinase (319 aa).

K21 is a catalytic residue. P106–S116 contacts ATP. The active site involves D148.

This sequence belongs to the GHMP kinase family. IspE subfamily.

The enzyme catalyses 4-CDP-2-C-methyl-D-erythritol + ATP = 4-CDP-2-C-methyl-D-erythritol 2-phosphate + ADP + H(+). It participates in isoprenoid biosynthesis; isopentenyl diphosphate biosynthesis via DXP pathway; isopentenyl diphosphate from 1-deoxy-D-xylulose 5-phosphate: step 3/6. Catalyzes the phosphorylation of the position 2 hydroxy group of 4-diphosphocytidyl-2C-methyl-D-erythritol. This Prochlorococcus marinus (strain SARG / CCMP1375 / SS120) protein is 4-diphosphocytidyl-2-C-methyl-D-erythritol kinase.